Consider the following 130-residue polypeptide: uncharacterized protein (130 aa).

Disordered stretches follow at residues 1 to 47 and 78 to 130; these read MTFY…QSNT and QTLE…SESS. The span at 13-33 shows a compositional bias: polar residues; that stretch reads QWKQLQTQQNKKNSPRPVTSS. The segment covering 86-110 has biased composition (basic residues); sequence PSKHKRKRTKYRRTKKSKHHSRKKT. Over residues 117 to 130 the composition is skewed to basic and acidic residues; it reads SERDSTTGRESESS.

This is an uncharacterized protein from Torque teno mini virus 1 (isolate TLMV-CBD279).